The primary structure comprises 76 residues: Acyl carrier protein (76 aa).

The Carrier domain maps to 1–76 (MATFDDVKDV…AAIDYIESKQ (76 aa)). Ser36 is subject to O-(pantetheine 4'-phosphoryl)serine.

Belongs to the acyl carrier protein (ACP) family. In terms of processing, 4'-phosphopantetheine is transferred from CoA to a specific serine of apo-ACP by AcpS. This modification is essential for activity because fatty acids are bound in thioester linkage to the sulfhydryl of the prosthetic group.

Its subcellular location is the cytoplasm. The protein operates within lipid metabolism; fatty acid biosynthesis. Carrier of the growing fatty acid chain in fatty acid biosynthesis. In Deinococcus deserti (strain DSM 17065 / CIP 109153 / LMG 22923 / VCD115), this protein is Acyl carrier protein.